The primary structure comprises 566 residues: MPVNRYRPFAEEVEHIRVTDRTWPDRVIDRAPLWCAVDLRDGNQALIDPMSPARKRRMFDLLVRMGYKEIEVGFPSASQTDFDFVREIITEGAIPDDVTIQVLTQCRPELIERTFEACAGASKVIVHFYNSTSILQRRVVFRADRAAVEAIATDGARRCVEEAAKYPDTQWRFEYSPESYTGTELEYAKQVCDAVAEVIQPTPENPIIFNLPATVEMATPNVYADSIEWMSRNLANRESVILSLHPHNDRGTAVAAAELGFAAGADRIEGCLFGNGERTGNVCLATLGLNLFSRGVDPQIDFSNIDEIRRTVEYCNQLPVPERHPYGGDLVYTAFSGSHQDAINKGLDAMEFDADAADSDMDDMLWQVPYLPIDPKDVGRTYEAVIRVNSQSGKGGVAYIMKADHGLALPRRLQIEFSRAIQEIAEGSAGEGGEVSPKEMWDAFAEEYLAPVRPLERIKQRVIAAEEDGGTTSIDATVKIDGKEAEISGSGNGPLAAFVHALGTVGFDVAVLDYSEHAMSAGDDAQAAAYVEASVAGKTVWGVGIAPSITTASLRAVVSAINRASR.

One can recognise a Pyruvate carboxyltransferase domain in the interval 32–306; the sequence is PLWCAVDLRD…DPQIDFSNID (275 aa). Residues aspartate 41, histidine 245, histidine 247, and asparagine 281 each coordinate Mg(2+). The segment at 451 to 566 is regulatory domain; it reads PVRPLERIKQ…VVSAINRASR (116 aa).

It belongs to the alpha-IPM synthase/homocitrate synthase family. LeuA type 2 subfamily. As to quaternary structure, homodimer. Mg(2+) serves as cofactor.

The protein localises to the cytoplasm. It catalyses the reaction 3-methyl-2-oxobutanoate + acetyl-CoA + H2O = (2S)-2-isopropylmalate + CoA + H(+). It participates in amino-acid biosynthesis; L-leucine biosynthesis; L-leucine from 3-methyl-2-oxobutanoate: step 1/4. In terms of biological role, catalyzes the condensation of the acetyl group of acetyl-CoA with 3-methyl-2-oxobutanoate (2-ketoisovalerate) to form 3-carboxy-3-hydroxy-4-methylpentanoate (2-isopropylmalate). This is 2-isopropylmalate synthase from Mycobacterium ulcerans (strain Agy99).